A 480-amino-acid polypeptide reads, in one-letter code: MNYKKSAENILQALGGEDNVEAMTHCATRLRLVLKDEGLVDEKALGDMDVVKGTFSTGGQYQVIIGSGTVNKVFSELEKITGKEASSVSEVKTQGTKNMNPFQRFVKMLSDIFVPIIPAIVAGGLLMGINNILTAPGIFYDNQSLIEVQNQFSGLAEMINIFANAPFTLLPILIGFSAAKRFGGNAYLGAALGMILVHPELMSAYDYPKALEAGKEIPHWNLFGLEINQVGYQGQVLPMLVATYILATIEKGLRKVIPTVLDNLLTPLLAILSTGFITFSFVGPLTRTLGYWLSDGLTWLYEFGGAIGGLIFGLLYAPIVITGMHHSFIAIETQLIADSSSTGGSFIFPIATMSNIAQGAAALAAFFIIKENKKLKGVASAAGVSALLGITEPAMFGVNLKLRYPFIGAIVGSGIGSAYIAFFKVKAIALGTAGIPGFISISGQNNGWLHYGIAMIIAFIVAFGVTYALSYRKKYRNIEA.

The PTS EIIB type-1 domain maps to 4 to 87 (KKSAENILQA…EKITGKEASS (84 aa)). Cysteine 26 serves as the catalytic Phosphocysteine intermediate; for EIIB activity. Helical transmembrane passes span 109-129 (LSDIFVPIIPAIVAGGLLMGI), 158-178 (MINIFANAPFTLLPILIGFSA), 182-202 (FGGNAYLGAALGMILVHPELM), 264-284 (LLTPLLAILSTGFITFSFVGP), 303-323 (FGGAIGGLIFGLLYAPIVITG), 349-369 (PIATMSNIAQGAAALAAFFII), 405-425 (PFIGAIVGSGIGSAYIAFFKV), and 449-469 (LHYGIAMIIAFIVAFGVTYAL). Residues 120–480 (IVAGGLLMGI…YRKKYRNIEA (361 aa)) enclose the PTS EIIC type-1 domain.

It is found in the cell membrane. The catalysed reaction is N(pros)-phospho-L-histidyl-[protein](out) + sucrose = sucrose 6(G)-phosphate(in) + L-histidyl-[protein]. In terms of biological role, the phosphoenolpyruvate-dependent sugar phosphotransferase system (sugar PTS), a major carbohydrate active transport system, catalyzes the phosphorylation of incoming sugar substrates concomitantly with their translocation across the cell membrane. This system is involved in sucrose transport. This is PTS system sucrose-specific EIIBC component from Staphylococcus xylosus.